A 396-amino-acid polypeptide reads, in one-letter code: Na(+)/H(+) antiporter NhaA (396 aa).

The next 11 membrane-spanning stretches (helical) occupy residues 14-34 (ASGI…NSGL), 59-79 (LLLW…GLEV), 95-115 (TFPA…YTFF), 124-144 (AGWA…MALL), 154-174 (VFLL…IALF), 178-198 (QLSL…LWMN), 205-225 (IGLY…SGVH), 254-274 (ALHP…NAGV), 278-298 (GIGL…GLFV), 328-348 (IFAV…IASL), and 363-383 (LGIL…LRMS).

The protein belongs to the NhaA Na(+)/H(+) (TC 2.A.33) antiporter family.

The protein resides in the cell inner membrane. It carries out the reaction Na(+)(in) + 2 H(+)(out) = Na(+)(out) + 2 H(+)(in). Its function is as follows. Na(+)/H(+) antiporter that extrudes sodium in exchange for external protons. This Aeromonas salmonicida (strain A449) protein is Na(+)/H(+) antiporter NhaA.